A 436-amino-acid chain; its full sequence is 3-ketoacyl-CoA thiolase (436 aa).

Cysteine 99 serves as the catalytic Acyl-thioester intermediate. Residues histidine 392 and cysteine 422 each act as proton acceptor in the active site.

It belongs to the thiolase-like superfamily. Thiolase family. Heterotetramer of two alpha chains (FadJ) and two beta chains (FadI).

The protein resides in the cytoplasm. It catalyses the reaction an acyl-CoA + acetyl-CoA = a 3-oxoacyl-CoA + CoA. Its pathway is lipid metabolism; fatty acid beta-oxidation. In terms of biological role, catalyzes the final step of fatty acid oxidation in which acetyl-CoA is released and the CoA ester of a fatty acid two carbons shorter is formed. This chain is 3-ketoacyl-CoA thiolase, found in Escherichia coli O6:H1 (strain CFT073 / ATCC 700928 / UPEC).